The chain runs to 532 residues: Variant surface glycoprotein ILTAT 1.23 (532 aa).

Positions methionine 1–alanine 23 are cleaved as a signal peptide. Asparagine 66 carries an N-linked (GlcNAc...) asparagine glycan. Disordered stretches follow at residues alanine 79–alanine 107 and methionine 408–lysine 504. An N-linked (GlcNAc...) asparagine glycan is attached at asparagine 419. Over residues cysteine 427–lysine 445 the composition is skewed to basic and acidic residues. Low complexity predominate over residues glycine 450–alanine 470. 2 stretches are compositionally biased toward basic and acidic residues: residues histidine 472–glycine 484 and lysine 494–lysine 504. Asparagine 509 carries N-linked (GlcNAc...) asparagine glycosylation. Asparagine 509 carries the GPI-anchor amidated asparagine lipid modification. A propeptide spans glycine 510–phenylalanine 532 (removed in mature form).

The protein resides in the cell membrane. In terms of biological role, VSG forms a coat on the surface of the parasite. The trypanosome evades the immune response of the host by expressing a series of antigenically distinct VSGs from an estimated 1000 VSG genes. This chain is Variant surface glycoprotein ILTAT 1.23, found in Trypanosoma brucei brucei.